A 590-amino-acid polypeptide reads, in one-letter code: Multidrug resistance ABC transporter ATP-binding and permease protein (590 aa).

6 helical membrane-spanning segments follow: residues 35-55, 79-99, 150-170, 176-196, 261-281, and 292-312; these read YLFF…QLQV, IALY…LGIF, IPQA…MLQM, LAMI…MTFG, VMML…IYLI, and LGMM…ATFF. In terms of domain architecture, ABC transmembrane type-1 spans 38–317; sequence FIIGILAGIV…VATFFTELAK (280 aa). Residues 349–584 form the ABC transporter domain; that stretch reads LSARHVDFAY…HPLYAKYVSE (236 aa). Residue 382-389 coordinates ATP; the sequence is GPSGGGKS.

The protein belongs to the ABC transporter superfamily. Multidrug exporter LmrA (TC 3.A.1.117.1) family. As to quaternary structure, homodimer.

It localises to the cell membrane. The catalysed reaction is ATP + H2O + xenobioticSide 1 = ADP + phosphate + xenobioticSide 2.. Functionally, efflux transporter for a variety of amphiphilic cationic compounds, including antibiotics. In Lactococcus lactis subsp. lactis (strain IL1403) (Streptococcus lactis), this protein is Multidrug resistance ABC transporter ATP-binding and permease protein (lmrA).